Here is a 284-residue protein sequence, read N- to C-terminus: ATP synthase subunit a (284 aa).

6 helical membrane-spanning segments follow: residues 55–75 (AIHVDTLGWSIAMGILFLGLF), 116–136 (IAPLALTIFVWILLMNILKLI), 165–185 (FGMSIGVFLLILFYSFKVKGV), 196–216 (PFNHWIMIPFNLLLEILALII), 234–254 (VVFILIALLPLWIQWTLNVPW), and 255–275 (AIFHILVIPLQAFIFTVLTVV).

Belongs to the ATPase A chain family. As to quaternary structure, F-type ATPases have 2 components, CF(1) - the catalytic core - and CF(0) - the membrane proton channel. CF(1) has five subunits: alpha(3), beta(3), gamma(1), delta(1), epsilon(1). CF(0) has three main subunits: a(1), b(2) and c(9-12). The alpha and beta chains form an alternating ring which encloses part of the gamma chain. CF(1) is attached to CF(0) by a central stalk formed by the gamma and epsilon chains, while a peripheral stalk is formed by the delta and b chains.

It is found in the cell inner membrane. Key component of the proton channel; it plays a direct role in the translocation of protons across the membrane. In Marinobacter nauticus (strain ATCC 700491 / DSM 11845 / VT8) (Marinobacter aquaeolei), this protein is ATP synthase subunit a.